Reading from the N-terminus, the 415-residue chain is F-box protein At3g13820 (415 aa).

Positions 1-50 (MTTMSNLPAEVLEEILSRTPVTSLRTMRSTCKKWNNLSKKKIIPEAARKQ) constitute an F-box domain. 2 disordered regions span residues 209–229 (NDYD…EDDD) and 387–415 (KQPK…KIIG). Residues 210 to 229 (DYDDQEDEEEEDDEEYEDDD) are compositionally biased toward acidic residues. Residues 403-415 (NKNKKGRKIKIIG) are compositionally biased toward basic residues.

This Arabidopsis thaliana (Mouse-ear cress) protein is F-box protein At3g13820.